The primary structure comprises 603 residues: Beta-hexosaminidase (603 aa).

Residues 1–19 (MAYFRLYAVLLAVASSVAA) form the signal peptide. Active-site charge relay system residues include D225, H278, and E349. A disulfide bridge links C293 with C354. N356 carries an N-linked (GlcNAc...) asparagine glycan. An intrachain disulfide couples C451 to C486. N-linked (GlcNAc...) asparagine glycosylation is found at N503 and N528. A disulfide bridge connects residues C586 and C593.

This sequence belongs to the glycosyl hydrolase 20 family. Homodimer.

The protein localises to the secreted. The catalysed reaction is Hydrolysis of terminal non-reducing N-acetyl-D-hexosamine residues in N-acetyl-beta-D-hexosaminides.. Functionally, part of the binary chitinolytic system. Involved in hydrolysis of chitobiose and higher chito-oligomers (produced from cell wall chitin by endochitinases), thus contributing to the formation of germ tubes, fruit-bodies and septa during hyphenation. Hydrolyzes synthetic substrates p-nitrophenyl-beta-N-acetyl-glucosamine (pNP-beta-GlcNAc), p-nitrophenyl-beta-N-acetyl-galactosamine (pNP-beta-GalNAc) and 5-bromo-4-chloro-3-indoyl-beta-D-N-glucosaminide (X-GlcNAc). The protein is Beta-hexosaminidase of Emericella nidulans (Aspergillus nidulans).